Consider the following 242-residue polypeptide: Ribonuclease PH (242 aa).

Phosphate is bound by residues R87 and S125–R127.

The protein belongs to the RNase PH family. In terms of assembly, homohexameric ring arranged as a trimer of dimers.

The catalysed reaction is tRNA(n+1) + phosphate = tRNA(n) + a ribonucleoside 5'-diphosphate. Functionally, phosphorolytic 3'-5' exoribonuclease that plays an important role in tRNA 3'-end maturation. Removes nucleotide residues following the 3'-CCA terminus of tRNAs; can also add nucleotides to the ends of RNA molecules by using nucleoside diphosphates as substrates, but this may not be physiologically important. Probably plays a role in initiation of 16S rRNA degradation (leading to ribosome degradation) during starvation. The polypeptide is Ribonuclease PH (Synechococcus sp. (strain JA-3-3Ab) (Cyanobacteria bacterium Yellowstone A-Prime)).